A 218-amino-acid chain; its full sequence is Large ribosomal subunit protein eL13 (218 aa).

The disordered stretch occupies residues 196 to 218; it reads AKRAKEAAESEDAAKGDPKKAKK. Over residues 199–218 the composition is skewed to basic and acidic residues; the sequence is AKEAAESEDAAKGDPKKAKK.

Belongs to the eukaryotic ribosomal protein eL13 family. Component of the 60S large ribosomal subunit (LSU).

It localises to the cytoplasm. Its function is as follows. Component of the ribosome, a large ribonucleoprotein complex responsible for the synthesis of proteins in the cell. The small ribosomal subunit (SSU) binds messenger RNAs (mRNAs) and translates the encoded message by selecting cognate aminoacyl-transfer RNA (tRNA) molecules. The large subunit (LSU) contains the ribosomal catalytic site termed the peptidyl transferase center (PTC), which catalyzes the formation of peptide bonds, thereby polymerizing the amino acids delivered by tRNAs into a polypeptide chain. The nascent polypeptides leave the ribosome through a tunnel in the LSU and interact with protein factors that function in enzymatic processing, targeting, and the membrane insertion of nascent chains at the exit of the ribosomal tunnel. As part of the LSU, it is probably required for its formation and the maturation of rRNAs. This is Large ribosomal subunit protein eL13 (RpL13) from Drosophila melanogaster (Fruit fly).